A 211-amino-acid polypeptide reads, in one-letter code: ATP-dependent dethiobiotin synthetase BioD 2 (211 aa).

13–18 contributes to the ATP binding site; the sequence is DIGKTI. Residue threonine 17 participates in Mg(2+) binding. Lysine 38 is an active-site residue. Threonine 42 serves as a coordination point for substrate. Residues aspartate 50, 115–118, and 175–176 contribute to the ATP site; these read EGAG and NT. Mg(2+)-binding residues include aspartate 50 and glutamate 115.

The protein belongs to the dethiobiotin synthetase family. Homodimer. Mg(2+) is required as a cofactor.

The protein resides in the cytoplasm. It catalyses the reaction (7R,8S)-7,8-diammoniononanoate + CO2 + ATP = (4R,5S)-dethiobiotin + ADP + phosphate + 3 H(+). The protein operates within cofactor biosynthesis; biotin biosynthesis; biotin from 7,8-diaminononanoate: step 1/2. Functionally, catalyzes a mechanistically unusual reaction, the ATP-dependent insertion of CO2 between the N7 and N8 nitrogen atoms of 7,8-diaminopelargonic acid (DAPA, also called 7,8-diammoniononanoate) to form a ureido ring. This Haemophilus ducreyi (strain 35000HP / ATCC 700724) protein is ATP-dependent dethiobiotin synthetase BioD 2.